Here is a 125-residue protein sequence, read N- to C-terminus: Fumarate reductase subunit D (125 aa).

Transmembrane regions (helical) follow at residues 30–50 (FAMITPITVLVLGILVPLGVI), 63–83 (FATSIIGALFIIGTLALPMWH), and 105–125 (IACYAFAGLISALAVVFIFMI).

Belongs to the FrdD family. As to quaternary structure, part of an enzyme complex containing four subunits: a flavoprotein (FrdA), an iron-sulfur protein (FrdB), and two hydrophobic anchor proteins (FrdC and FrdD).

The protein localises to the cell inner membrane. Functionally, anchors the catalytic components of the fumarate reductase complex to the cell membrane, binds quinones. The protein is Fumarate reductase subunit D of Vibrio campbellii (strain ATCC BAA-1116).